We begin with the raw amino-acid sequence, 138 residues long: ATP synthase epsilon chain (138 aa).

Belongs to the ATPase epsilon chain family. F-type ATPases have 2 components, CF(1) - the catalytic core - and CF(0) - the membrane proton channel. CF(1) has five subunits: alpha(3), beta(3), gamma(1), delta(1), epsilon(1). CF(0) has three main subunits: a, b and c.

The protein localises to the cell membrane. In terms of biological role, produces ATP from ADP in the presence of a proton gradient across the membrane. This chain is ATP synthase epsilon chain (atpC), found in Streptococcus mutans serotype c (strain ATCC 700610 / UA159).